The primary structure comprises 3564 residues: MTAWRRFQSLLLLLGLLVLCARLLTAAKGQNCGGLVQGPNGTIESPGFPHGYPNYANCTWIIITGERNRIQLSFHTFALEEDFDILSVYDGQPQQGNLKVRLSGFQLPSSIVSTGSILTLWFTTDFAVSAQGFKALYEVLPSHTCGNPGEILKGVLHGTRFNIGDKIRYSCLPGYILEGHAILTCIVSPGNGASWDFPAPFCRAEGACGGTLRGTSSSISSPHFPSEYENNADCTWTILAEPGDTIALVFTDFQLEEGYDFLEISGTEAPSIWLTGMNLPSPVISSKNWLRLHFTSDSNHRRKGFNAQFQVKKAIELKSRGVKMLPSKDGSHKNSVLSQGGVALVSDMCPDPGIPENGRRAGSDFRVGANVQFSCEDNYVLQGSKSITCQRVTETLAAWSDHRPICRARTCGSNLRGPSGVITSPNYPVQYEDNAHCVWVITTTDPDKVIKLAFEEFELERGYDTLTVGDAGKVGDTRSVLYVLTGSSVPDLIVSMSNQMWLHLQSDDSIGSPGFKAVYQEIEKGGCGDPGIPAYGKRTGSSFLHGDTLTFECPAAFELVGERVITCQQNNQWSGNKPSCVFSCFFNFTASSGIILSPNYPEEYGNNMNCVWLIISEPGSRIHLIFNDFDVEPQFDFLAVKDDGISDITVLGTFSGNEVPSQLASSGHIVRLEFQSDHSTTGRGFNITYTTFGQNECHDPGIPINGRRFGDRFLLGSSVSFHCDDGFVKTQGSESITCILQDGNVVWSSTVPRCEAPCGGHLTASSGVILPPGWPGYYKDSLHCEWIIEAKPGHSIKITFDRFQTEVNYDTLEVRDGPASSSPLIGEYHGTQAPQFLISTGNFMYLLFTTDNSRSSIGFLIHYESVTLESDSCLDPGIPVNGHRHGGDFGIRSTVTFSCDPGYTLSDDEPLVCERNHQWNHALPSCDALCGGYIQGKSGTVLSPGFPDFYPNSLNCTWTIEVSHGKGVQMIFHTFHLESSHDYLLITEDGSFSEPVARLTGSVLPHTIKAGLFGNFTAQLRFISDFSISYEGFNITFSEYDLEPCDDPGVPAFSRRIGFHFGVGDSLTFSCFLGYRLEGATKLTCLGGGRRVWSAPLPRCVAECGASVKGNEGTLLSPNFPSNYDNNHECIYKIETEAGKGIHLRTRSFQLFEGDTLKVYDGKDSSSRPLGTFTKNELLGLILNSTSNHLWLEFNTNGSDTDQGFQLTYTSFDLVKCEDPGIPNYGYRIRDEGHFTDTVVLYSCNPGYAMHGSNTLTCLSGDRRVWDKPLPSCIAECGGQIHAATSGRILSPGYPAPYDNNLHCTWIIEADPGKTISLHFIVFDTEMAHDILKVWDGPVDSDILLKEWSGSALPEDIHSTFNSLTLQFDSDFFISKSGFSIQFSTSIAATCNDPGMPQNGTRYGDSREAGDTVTFQCDPGYQLQGQAKITCVQLNNRFFWQPDPPTCIAACGGNLTGPAGVILSPNYPQPYPPGKECDWRVKVNPDFVIALIFKSFNMEPSYDFLHIYEGEDSNSPLIGSYQGSQAPERIESSGNSLFLAFRSDASVGLSGFAIEFKEKPREACFDPGNIMNGTRVGTDFKLGSTITYQCDSGYKILDPSSITCVIGADGKPSWDQVLPSCNAPCGGQYTGSEGVVLSPNYPHNYTAGQICLYSITVPKEFVVFGQFAYFQTALNDLAELFDGTHAQARLLSSLSGSHSGETLPLATSNQILLRFSAKSGASARGFHFVYQAVPRTSDTQCSSVPEPRYGRRIGSEFSAGSIVRFECNPGYLLQGSTALHCQSVPNALAQWNDTIPSCVVPCSGNFTQRRGTILSPGYPEPYGNNLNCIWKIIVTEGSGIQIQVISFATEQNWDSLEIHDGGDVTAPRLGSFSGTTVPALLNSTSNQLYLHFQSDISVAAAGFHLEYKTVGLAACQEPALPSNSIKIGDRYMVNDVLSFQCEPGYTLQGRSHISCMPGTVRRWNYPSPLCIATCGGTLSTLGGVILSPGFPGSYPNNLDCTWRISLPIGYGAHIQFLNFSTEANHDFLEIQNGPYHTSPMIGQFSGTDLPAALLSTTHETLIHFYSDHSQNRQGFKLAYQAYELQNCPDPPPFQNGYMINSDYSVGQSVSFECYPGYILIGHPVLTCQHGINRNWNYPFPRCDAPCGYNVTSQNGTIYSPGFPDEYPILKDCIWLITVPPGHGVYINFTLLQTEAVNDYIAVWDGPDQNSPQLGVFSGNTALETAYSSTNQVLLKFHSDFSNGGFFVLNFHAFQLKKCQPPPAVPQAEMLTEDDDFEIGDFVKYQCHPGYTLVGTDILTCKLSSQLQFEGSLPTCEAQCPANEVRTGSSGVILSPGYPGNYFNSQTCSWSIKVEPNYNITIFVDTFQSEKQFDALEVFDGSSGQSPLLVVLSGNHTEQSNFTSRSNQLYLRWSTDHATSKKGFKIRYAAPYCSLTHPLKNGGILNRTAGAVGSKVHYFCKPGYRMVGHSNATCRRNPLGMYQWDSLTPLCQAVSCGIPESPGNGSFTGNEFTLDSKVVYECHEGFKLESSQQATAVCQEDGLWSNKGKPPTCKPVACPSIEAQLSEHVIWRLVSGSLNEYGAQVLLSCSPGYYLEGWRLLRCQANGTWNIGDERPSCRVISCGSLSFPPNGNKIGTLTVYGATAIFTCNTGYTLVGSHVRECLANGLWSGSETRCLAGHCGSPDPIVNGHISGDGFSYRDTVVYQCNPGFRLVGTSVRICLQDHKWSGQTPVCVPITCGHPGNPAHGFTNGSEFNLNDVVNFTCNTGYLLQGVSRAQCRSNGQWSSPLPTCRVVNCSDPGFVENAIRHGQQNFPESFEYGMSILYHCKKGFYLLGSSALTCMANGLWDRSLPKCLAISCGHPGVPANAVLTGELFTYGAVVHYSCRGSESLIGNDTRVCQEDSHWSGALPHCTGNNPGFCGDPGTPAHGSRLGDDFKTKSLLRFSCEMGHQLRGSPERTCLLNGSWSGLQPVCEAVSCGNPGTPTNGMIVSSDGILFSSSVIYACWEGYKTSGLMTRHCTANGTWTGTAPDCTIISCGDPGTLANGIQFGTDFTFNKTVSYQCNPGYVMEAVTSATIRCTKDGRWNPSKPVCKAVLCPQPPPVQNGTVEGSDFRWGSSISYSCMDGYQLSHSAILSCEGRGVWKGEIPQCLPVFCGDPGIPAEGRLSGKSFTYKSEVFFQCKSPFILVGSSRRVCQADGTWSGIQPTCIDPAHNTCPDPGTPHFGIQNSSRGYEVGSTVFFRCRKGYHIQGSTTRTCLANLTWSGIQTECIPHACRQPETPAHADVRAIDLPTFGYTLVYTCHPGFFLAGGSEHRTCKADMKWTGKSPVCKSKGVREVNETVTKTPVPSDVFFVNSLWKGYYEYLGKRQPATLTVDWFNATSSKVNATFSEASPVELKLTGIYKKEEAHLLLKAFQIKGQADIFVSKFENDNWGLDGYVSSGLERGGFTFQGDIHGKDFGKFKLERQDPLNPDQDSSSHYHGTSSGSVAAAILVPFFALILSGFAFYLYKHRTRPKVQYNGYAGHENSNGQASFENPMYDTNLKPTEAKAVRFDTTLNTVCTVV.

A signal peptide spans 1–26 (MTAWRRFQSLLLLLGLLVLCARLLTA). Topologically, residues 27–3487 (AKGQNCGGLV…SHYHGTSSGS (3461 aa)) are extracellular. 10 disulfide bridges follow: C32-C58, C145-C185, C171-C202, C208-C234, C349-C389, C375-C406, C411-C437, C527-C567, C553-C580, and C584-C610. The CUB 1 domain occupies 32–140 (CGGLVQGPNG…QGFKALYEVL (109 aa)). Residues N40 and N57 are each glycosylated (N-linked (GlcNAc...) asparagine). The Sushi 1 domain occupies 143–204 (HTCGNPGEIL…WDFPAPFCRA (62 aa)). A CUB 2 domain is found at 208–312 (CGGTLRGTSS…KGFNAQFQVK (105 aa)). The Sushi 2 domain occupies 347–408 (DMCPDPGIPE…WSDHRPICRA (62 aa)). The CUB 3 domain occupies 411-522 (CGSNLRGPSG…PGFKAVYQEI (112 aa)). One can recognise a Sushi 3 domain in the interval 525–582 (GGCGDPGIPAYGKRTGSSFLHGDTLTFECPAAFELVGERVITCQQNNQWSGNKPSCVF). The CUB 4 domain maps to 584-692 (CFFNFTASSG…RGFNITYTTF (109 aa)). N-linked (GlcNAc...) asparagine glycosylation is found at N587 and N686. One can recognise a Sushi 4 domain in the interval 695–756 (NECHDPGIPI…WSSTVPRCEA (62 aa)). Cystine bridges form between C697/C738, C723/C754, C758/C784, C873/C913, C899/C926, and C930/C956. The CUB 5 domain maps to 758 to 866 (CGGHLTASSG…IGFLIHYESV (109 aa)). The Sushi 5 domain maps to 871–928 (DSCLDPGIPVNGHRHGGDFGIRSTVTFSCDPGYTLSDDEPLVCERNHQWNHALPSCDA). The 111-residue stretch at 930–1040 (CGGYIQGKSG…EGFNITFSEY (111 aa)) folds into the CUB 6 domain. N-linked (GlcNAc...) asparagine glycans are attached at residues N955, N1015, and N1034. The region spanning 1043–1102 (EPCDDPGVPAFSRRIGFHFGVGDSLTFSCFLGYRLEGATKLTCLGGGRRVWSAPLPRCVA) is the Sushi 6 domain. 3 disulfides stabilise this stretch: C1045/C1085, C1071/C1100, and C1104/C1130. The region spanning 1104–1212 (CGASVKGNEG…QGFQLTYTSF (109 aa)) is the CUB 7 domain. 2 N-linked (GlcNAc...) asparagine glycosylation sites follow: N1184 and N1197. Residues 1215-1275 (VKCEDPGIPN…WDKPLPSCIA (61 aa)) enclose the Sushi 7 domain. 12 disulfides stabilise this stretch: C1217–C1258, C1244–C1273, C1277–C1304, C1391–C1431, C1417–C1447, C1451–C1477, C1564–C1604, C1590–C1621, C1625–C1651, C1741–C1781, C1767–C1798, and C1802–C1828. Positions 1277-1386 (CGGQIHAATS…SGFSIQFSTS (110 aa)) constitute a CUB 8 domain. The region spanning 1389 to 1449 (ATCNDPGMPQ…WQPDPPTCIA (61 aa)) is the Sushi 8 domain. The N-linked (GlcNAc...) asparagine glycan is linked to N1399. The CUB 9 domain occupies 1451 to 1559 (CGGNLTGPAG…SGFAIEFKEK (109 aa)). 2 N-linked (GlcNAc...) asparagine glycosylation sites follow: N1454 and N1572. The 62-residue stretch at 1562-1623 (EACFDPGNIM…WDQVLPSCNA (62 aa)) folds into the Sushi 9 domain. One can recognise a CUB 10 domain in the interval 1625-1733 (CGGQYTGSEG…RGFHFVYQAV (109 aa)). Residue N1644 is glycosylated (N-linked (GlcNAc...) asparagine). The 62-residue stretch at 1739–1800 (TQCSSVPEPR…WNDTIPSCVV (62 aa)) folds into the Sushi 10 domain. N-linked (GlcNAc...) asparagine glycosylation is found at N1792, N1805, and N1882. Positions 1802-1910 (CSGNFTQRRG…AGFHLEYKTV (109 aa)) constitute a CUB 11 domain. The Sushi 11 domain maps to 1913-1972 (AACQEPALPSNSIKIGDRYMVNDVLSFQCEPGYTLQGRSHISCMPGTVRRWNYPSPLCIA). 3 cysteine pairs are disulfide-bonded: C1915-C1955, C1941-C1970, and C1974-C2000. One can recognise a CUB 12 domain in the interval 1974–2082 (CGGTLSTLGG…QGFKLAYQAY (109 aa)). The N-linked (GlcNAc...) asparagine glycan is linked to N2018. In terms of domain architecture, Sushi 12 spans 2085-2144 (QNCPDPPPFQNGYMINSDYSVGQSVSFECYPGYILIGHPVLTCQHGINRNWNYPFPRCDA). Cystine bridges form between C2087–C2127, C2113–C2142, and C2146–C2172. One can recognise a CUB 13 domain in the interval 2146 to 2257 (CGYNVTSQNG…LNFHAFQLKK (112 aa)). Residues N2149, N2154, and N2187 are each glycosylated (N-linked (GlcNAc...) asparagine). The Sushi 13 domain occupies 2256–2317 (KKCQPPPAVP…FEGSLPTCEA (62 aa)). Intrachain disulfides connect C2258–C2300, C2286–C2315, and C2319–C2347. The 112-residue stretch at 2319–2430 (CPANEVRTGS…KGFKIRYAAP (112 aa)) folds into the CUB 14 domain. N-linked (GlcNAc...) asparagine glycans are attached at residues N2358, N2394, N2400, N2445, N2470, and N2503. 15 Sushi domains span residues 2430–2492 (PYCS…LCQA), 2493–2554 (VSCG…TCKP), 2555–2619 (VACP…SCRV), 2620–2677 (ISCG…RCLA), 2678–2735 (GHCG…VCVP), 2736–2793 (ITCG…TCRV), 2794–2856 (VNCS…KCLA), 2857–2914 (ISCG…HCTG), 2918–2975 (GFCG…VCEA), 2976–3034 (VSCG…DCTI), 3035–3094 (ISCG…VCKA), 3095–3152 (VLCP…QCLP), 3153–3210 (VFCG…TCID), 3214–3272 (NTCP…ECIP), and 3273–3332 (HACR…VCKS). 12 disulfide bridges follow: C2432–C2473, C2459–C2490, C2495–C2537, C2521–C2552, C2557–C2602, C2588–C2617, C2622–C2662, C2648–C2675, C2680–C2720, C2706–C2733, C2738–C2778, and C2764–C2791. N2605 carries N-linked (GlcNAc...) asparagine glycosylation. Residues N2750 and N2761 are each glycosylated (N-linked (GlcNAc...) asparagine). A glycan (N-linked (GlcNAc...) asparagine) is linked at N2795. Cystine bridges form between C2796-C2841, C2827-C2854, C2859-C2899, C2885-C2912, C2920-C2960, C2946-C2973, C2978-C3019, C3005-C3032, C3037-C3079, C3063-C3092, C3097-C3137, C3123-C3150, C3155-C3195, C3181-C3208, C3216-C3257, C3243-C3270, C3275-C3317, and C3302-C3330. An N-linked (GlcNAc...) asparagine glycan is attached at N2894. The N-linked (GlcNAc...) asparagine glycan is linked to N2963. N-linked (GlcNAc...) asparagine glycosylation is found at N3022 and N3056. N3105 carries an N-linked (GlcNAc...) asparagine glycan. Residues N3228 and N3260 are each glycosylated (N-linked (GlcNAc...) asparagine). Residues N3339, N3379, and N3386 are each glycosylated (N-linked (GlcNAc...) asparagine). A helical membrane pass occupies residues 3488–3508 (VAAAILVPFFALILSGFAFYL). The Cytoplasmic segment spans residues 3509–3564 (YKHRTRPKVQYNGYAGHENSNGQASFENPMYDTNLKPTEAKAVRFDTTLNTVCTVV).

The protein belongs to the CSMD family. In terms of tissue distribution, weakly expressed in most tissues, except in brain. Expressed at intermediate level in brain, including cerebellum, substantia nigra, hippocampus and fetal brain.

The protein resides in the membrane. Potential suppressor of squamous cell carcinomas. The protein is CUB and sushi domain-containing protein 1 (CSMD1) of Homo sapiens (Human).